A 302-amino-acid chain; its full sequence is Recombination-associated protein RdgC (302 aa).

This sequence belongs to the RdgC family.

The protein localises to the cytoplasm. Its subcellular location is the nucleoid. Its function is as follows. May be involved in recombination. The sequence is that of Recombination-associated protein RdgC from Actinobacillus pleuropneumoniae serotype 7 (strain AP76).